We begin with the raw amino-acid sequence, 478 residues long: MIRRLHDTNDLVRAFPRVHFVGIGGTGMSGIAEVMLTLGYEVSGSDNADNVATRRLASLGARIMRGHSAANVLGTDCVVVSSAIREDNPELMEARSQRIPIMPRAAMLAELMRFRRGIAVAGTHGKTTTTSLTAAVLSEGGLDPTFVIGGQLLAAGANAKLGGGQWLVAEADESDGSFLRLNPLMSIITNIDADHLENYGNDFARVQAAFAEFLQRLPFYGLAVLCIDDPEVAALAAKTPRHVMSYGMSPQADVRAENVVQEGSRMRFTLRLPQGTSQEVVLALPGKHNVLNALAAAAVGWQLGVAPDAIARALEGFAGVGRRFNDLGEVTTASGAKVRIIDDYGHHPSELEAVFAAARGGWADKRLVVAFQPHRYSRTRDQFDKFAAVLSSVDALVLSEVYPAGEEPIAGADSHALARAIRARGRSEPVVVGKAAELASVLPDVLQDGDLLLMMGAGDIGAVATHIAVEGFKGEGEA.

122 to 128 (GTHGKTT) is a binding site for ATP.

This sequence belongs to the MurCDEF family.

The protein resides in the cytoplasm. The catalysed reaction is UDP-N-acetyl-alpha-D-muramate + L-alanine + ATP = UDP-N-acetyl-alpha-D-muramoyl-L-alanine + ADP + phosphate + H(+). The protein operates within cell wall biogenesis; peptidoglycan biosynthesis. Cell wall formation. The chain is UDP-N-acetylmuramate--L-alanine ligase from Stenotrophomonas maltophilia (strain R551-3).